Consider the following 245-residue polypeptide: MKIIFNADDFGISPGAVYGILESYRRGVVKSTTLLANSPAFDLAVEVAKENPGLDIGAHLTLTFGYPLLQGLETLTDDNGRFRKNYTALESGLANVDMEEVERELTAQIEKILGAGITISHFDTHHSIEPLIYPVQHKLAEKYGVSIRRHSDVSDFGAIKTPDLFDTSFYADGVSFETIKKIVQEHIGTNDVVEVMTHPAYIDETLREISSYVEPRIKEVSILTSRELQAYLGQQEVEIISFRDL.

Positions 59 and 125 each coordinate Mg(2+).

This sequence belongs to the YdjC deacetylase family. In terms of assembly, homodimer. Requires Mg(2+) as cofactor.

Probably catalyzes the deacetylation of acetylated carbohydrates an important step in the degradation of oligosaccharides. This Listeria innocua serovar 6a (strain ATCC BAA-680 / CLIP 11262) protein is Carbohydrate deacetylase 1.